The sequence spans 130 residues: Small ribosomal subunit protein uS9 (130 aa).

The protein belongs to the universal ribosomal protein uS9 family.

This is Small ribosomal subunit protein uS9 from Pectobacterium atrosepticum (strain SCRI 1043 / ATCC BAA-672) (Erwinia carotovora subsp. atroseptica).